The sequence spans 383 residues: Microtubule-associated protein tau (383 aa).

Positions 1 to 27 are enriched in basic and acidic residues; that stretch reads MAEPRQEFDVMEDHAGTYGLGDRKDQE. Positions 1 to 198 are disordered; the sequence is MAEPRQEFDV…PVPMPDLKNV (198 aa). Residue Ala2 is modified to N-acetylalanine. A phosphotyrosine mark is found at Tyr18 and Tyr29. Lys44 is covalently cross-linked (Glycyl lysine isopeptide (Lys-Gly) (interchain with G-Cter in ubiquitin)). Thr53 bears the Phosphothreonine mark. Basic and acidic residues predominate over residues 72-91; the sequence is KSKDGTGSDDKKAKGADGKT. The residue at position 95 (Thr95) is a Phosphothreonine. Residue Arg97 is modified to Omega-N-methylarginine. Residue Lys105 is modified to N6,N6-dimethyllysine; alternate. Lys105 carries the N6-acetyllysine; alternate modification. Residues Thr111, Thr117, and Thr123 each carry the phosphothreonine modification. A compositionally biased stretch (pro residues) spans 116 to 128; it reads KTPPAPKTPPSSG. A phosphoserine mark is found at Ser127, Ser133, and Ser137. Residues 129–156 show a composition bias toward low complexity; it reads EPPKSGDRSGYSSPGSPGTPGSRSRTPS. At Tyr139 the chain carries Phosphotyrosine. Ser140, Ser141, and Ser144 each carry phosphoserine. A phosphothreonine mark is found at Thr147 and Thr154. A Phosphoserine modification is found at Ser156. A Phosphothreonine modification is found at Thr159. Lys167 carries the N6-acetyllysine modification. Thr173 carries the phosphothreonine modification. Ser177 and Ser179 each carry phosphoserine. Tau/MAP repeat units lie at residues 186-216, 217-247, 248-278, and 279-310; these read QTAPVPMPDLKNVKSKIGSTENLKHQPGGGK, VQIINKKLDLSNVQSKCGSKDNIKHVPGGGS, VQIVYKPVDLSKVTSKCGSLGNIHHKPGGGQ, and VEVKSEKLDFKDRVQSKIGSLDNITHVPGGGN. Residue Lys196 forms a Glycyl lysine isopeptide (Lys-Gly) (interchain with G-Cter in ubiquitin) linkage. Lys201 carries the N6-acetyllysine; alternate modification. Residue Lys201 is modified to N6-methyllysine; alternate. Lys201 participates in a covalent cross-link: Glycyl lysine isopeptide (Lys-Gly) (interchain with G-Cter in ubiquitin); alternate. Ser204 carries the post-translational modification Phosphoserine. Lys209 is covalently cross-linked (Glycyl lysine isopeptide (Lys-Gly) (interchain with G-Cter in ubiquitin)). Lys223 carries the post-translational modification N6-acetyllysine; alternate. Lys223 is covalently cross-linked (Glycyl lysine isopeptide (Lys-Gly) (interchain with G-Cter in ubiquitin); alternate). A phosphoserine mark is found at Ser227 and Ser231. Lys232 carries the post-translational modification N6-acetyllysine. A disulfide bond links Cys233 and Cys264. The residue at position 235 (Ser235) is a Phosphoserine. The residue at position 240 (Lys240) is an N6-acetyllysine; alternate. Lys240 is covalently cross-linked (Glycyl lysine isopeptide (Lys-Gly) (interchain with G-Cter in ubiquitin); alternate). Ser247 is modified (phosphoserine). Lys253 is subject to N6,N6-dimethyllysine; alternate. Lys253, Lys259, and Lys263 each carry N6-acetyllysine; alternate. Glycyl lysine isopeptide (Lys-Gly) (interchain with G-Cter in ubiquitin); alternate cross-links involve residues Lys253, Lys259, and Lys263. Position 266 is a phosphoserine (Ser266). Lys273, Lys285, and Lys289 each carry N6-acetyllysine; alternate. Residues Lys273, Lys285, and Lys289 each participate in a glycyl lysine isopeptide (Lys-Gly) (interchain with G-Cter in ubiquitin); alternate cross-link. The residue at position 291 (Arg291) is an Omega-N-methylarginine. Ser294 is modified (phosphoserine). Residue Lys295 forms a Glycyl lysine isopeptide (Lys-Gly) (interchain with G-Cter in ubiquitin) linkage. Phosphoserine is present on Ser298. The residue at position 311 (Lys311) is an N6-acetyllysine; alternate. Residue Lys311 forms a Glycyl lysine isopeptide (Lys-Gly) (interchain with G-Cter in ubiquitin); alternate linkage. Lys317 participates in a covalent cross-link: Glycyl lysine isopeptide (Lys-Gly) (interchain with G-Cter in ubiquitin). Lys327 carries the post-translational modification N6-acetyllysine; alternate. Lys327 participates in a covalent cross-link: Glycyl lysine isopeptide (Lys-Gly) (interchain with G-Cter in ubiquitin); alternate. Residue Tyr336 is modified to Phosphotyrosine. 2 positions are modified to phosphoserine: Ser338 and Ser342. Residues 340–359 are disordered; the sequence is VVSGDTSPRHLSNVSSTGSI. A compositionally biased stretch (polar residues) spans 343 to 358; that stretch reads GDTSPRHLSNVSSTGS. Residue Thr345 is modified to Phosphothreonine. Phosphoserine is present on residues Ser346, Ser351, Ser358, and Ser364. Thr369 is modified (phosphothreonine).

Interacts with MARK1, MARK2, MARK3 and MARK4. Interacts with SQSTM1 when polyubiquitinated. Interacts with PSMC2 through SQSTM1. Interacts with FKBP4. Binds to CSNK1D. Interacts with SGK1. Interacts with PIN1. Interacts with LRRK2. Interacts with LRP1, leading to endocytosis; this interaction is reduced in the presence of LRPAP1/RAP. Polyubiquitinated. Requires functional TRAF6 and may provoke SQSTM1-dependent degradation by the proteasome. In terms of processing, phosphorylation at various serine and threonine residues in S-P or T-P motifs by proline-directed protein kinases (PDPK1, CDK1, CDK5, GSK3, MAPK) (a few sites per protein in interphase, more in mitosis), and at serine residues in K-X-G-S motifs by MAP/microtubule affinity-regulating kinase (MARK1, MARK2, MARK3 or MARK4), causing detachment from microtubules, and their disassembly. Phosphorylation at Ser-204 by BRSK1 and BRSK2 in neurons affects ability to bind microtubules and plays a role in neuron polarization. Phosphorylated by PHK. Dephosphorylation at several serine and threonine residues by the serine/threonine phosphatase PPP5C. Expressed in neurons.

Its subcellular location is the cytoplasm. It is found in the cytosol. The protein localises to the cell membrane. It localises to the cytoskeleton. The protein resides in the cell projection. Its subcellular location is the axon. It is found in the dendrite. Functionally, promotes microtubule assembly and stability, and might be involved in the establishment and maintenance of neuronal polarity. The C-terminus binds axonal microtubules while the N-terminus binds neural plasma membrane components, suggesting that tau functions as a linker protein between both. Axonal polarity is predetermined by tau localization (in the neuronal cell) in the domain of the cell body defined by the centrosome. In Papio hamadryas (Hamadryas baboon), this protein is Microtubule-associated protein tau (MAPT).